A 930-amino-acid polypeptide reads, in one-letter code: MARLGRTGFLTLAVVFHLIYAYSIFDIYFVSPIVSGMRPFRVEREPGSEAPAKRLVLFVADGLRADKAFELTPDPDLPEESNGDDLTFLAPFIRSRVLSHGTFGISHTRVPTESRPGHVALIAGLYEDVSAVTTGWKLNPVNFDSVFNRSRHTWSWGSPDILLMFKEGAVPGRVDADTYGEELEDFTSDATALDIWVFDKVKELFASAKKDPELNAKLREDKNVFFLHLLGLDTTGHGYRPYSKEYLRNIKLVDQGIKEISQLVEDFYGDDKTAFVFTADHGMSDWGSHGDGHPDNTRTPLVVWGSGVAPPKQPQHGVPSGHEDGVSADWHLNQVQRNDVAQADVAALMAYLVGLDFPTNSVGQLPLEYVDGTPREKALAALANTQEVLEMYHVKEEHKKAALLRYRPFEPLASDYGNSAEQRLAMIKDLIDRGFYEDAIETSAALFATALEGLRYLQTYDWLFLRTIVTFGYVGWIAYALTTVIHLHVLHGASESDRTTASISFFSSVLVALFSVFLYQGSPWRYYLYGFFPIFFWEEVFARRKAFHAGRAGALLLPKRDLHSNKVEDIDTITYGGAFMLLTGLLYLLFEDEILGTSHQPAAVSRKGSRNIMGLQLGMVLLALIVTRSSAASLQAKQGLPFGNQVVGWGVLIASLLLPFAHRLYPNSHYLHRLMIIFLTFSPTFIILTISYEGLFYFAFCMTLVTWVRLEHATYVYTAKPVAKQAQETIEPPKKANPGATTVVDGETYRFRTLTVSDARVALFFFFLLQSAFFSTGNIASISSFSLDSVYRLIPVFNPFSQGALLILKLLIPFAIISANLGILNRRLEVAPSALFMVVMAISDVMTLNFFYMVRDEGSWLDIGTTISHFCIASFLCTFVAGLEFLSEVFISGVDFGLRTDAITASVPDIVNGITSKGQKDVPNGVEDKE.

Residues methionine 1–glycine 8 lie on the Cytoplasmic side of the membrane. A helical transmembrane segment spans residues phenylalanine 9 to phenylalanine 29. Topologically, residues valine 30–arginine 466 are lumenal. Asparagine 148 carries an N-linked (GlcNAc...) asparagine glycan. A helical transmembrane segment spans residues threonine 467–leucine 487. Topologically, residues histidine 488–arginine 498 are cytoplasmic. Residues threonine 499 to tyrosine 519 traverse the membrane as a helical segment. Residues glutamine 520–glycine 521 are Lumenal-facing. The helical transmembrane segment at serine 522–alanine 542 threads the bilayer. The Cytoplasmic portion of the chain corresponds to arginine 543–aspartate 569. The helical transmembrane segment at isoleucine 570 to phenylalanine 590 threads the bilayer. Over glutamate 591 to asparagine 611 the chain is Lumenal. The chain crosses the membrane as a helical span at residues isoleucine 612–alanine 632. At serine 633–glycine 639 the chain is on the cytoplasmic side. A helical membrane pass occupies residues leucine 640–phenylalanine 660. Residues alanine 661 to threonine 684 are Lumenal-facing. The chain crosses the membrane as a helical span at residues phenylalanine 685–valine 705. The Cytoplasmic segment spans residues threonine 706–valine 761. A helical transmembrane segment spans residues alanine 762–isoleucine 782. The Lumenal segment spans residues serine 783–glycine 803. A helical transmembrane segment spans residues alanine 804 to leucine 824. At asparagine 825–serine 833 the chain is on the cytoplasmic side. A helical transmembrane segment spans residues alanine 834 to valine 854. The Lumenal segment spans residues arginine 855–phenylalanine 870. Residues cysteine 871–isoleucine 891 form a helical membrane-spanning segment. Topologically, residues serine 892–glutamate 930 are cytoplasmic.

This sequence belongs to the PIGG/PIGN/PIGO family. PIGN subfamily.

It is found in the endoplasmic reticulum membrane. Its pathway is glycolipid biosynthesis; glycosylphosphatidylinositol-anchor biosynthesis. Functionally, ethanolamine phosphate transferase involved in glycosylphosphatidylinositol-anchor biosynthesis. Transfers ethanolamine phosphate to the first alpha-1,4-linked mannose of the glycosylphosphatidylinositol precursor of GPI-anchor. In Emericella nidulans (strain FGSC A4 / ATCC 38163 / CBS 112.46 / NRRL 194 / M139) (Aspergillus nidulans), this protein is GPI ethanolamine phosphate transferase 1 (mcd4).